We begin with the raw amino-acid sequence, 433 residues long: Tol-Pal system protein TolB (433 aa).

A signal peptide spans 1–21 (MIKRLRGLLVMLCCVAGMAVA).

Belongs to the TolB family. As to quaternary structure, the Tol-Pal system is composed of five core proteins: the inner membrane proteins TolA, TolQ and TolR, the periplasmic protein TolB and the outer membrane protein Pal. They form a network linking the inner and outer membranes and the peptidoglycan layer.

It localises to the periplasm. Functionally, part of the Tol-Pal system, which plays a role in outer membrane invagination during cell division and is important for maintaining outer membrane integrity. The polypeptide is Tol-Pal system protein TolB (Pseudomonas putida (strain ATCC 47054 / DSM 6125 / CFBP 8728 / NCIMB 11950 / KT2440)).